The primary structure comprises 1657 residues: Endoribonuclease Dicer homolog 4 (1657 aa).

Residues 1-14 (MGDAAAAAPAAAAA) show a composition bias toward low complexity. The interval 1 to 26 (MGDAAAAAPAAAAAGPSSTRGEPKDP) is disordered. The Helicase ATP-binding domain occupies 37-214 (LCKRAVEENI…SHSFTEKGGR (178 aa)). 50–57 (LGTGCGKT) is an ATP binding site. The DECH box signature appears at 157–160 (DECH). Positions 400–567 (NKFSVLINVL…TSNDMFDCLE (168 aa)) constitute a Helicase C-terminal domain. The 91-residue stretch at 585-675 (SVSLLHCYCD…LPGPGSRKNK (91 aa)) folds into the Dicer dsRNA-binding fold domain. In terms of domain architecture, PAZ spans 856–978 (DVSVHASYSS…LPPELCSLKV (123 aa)). 2 consecutive RNase III domains span residues 1010–1173 (DVML…VEGG) and 1214–1358 (IAGL…LDSG). Mg(2+) is bound by residues Glu1252, Asp1344, and Glu1347. Positions 1384–1451 (NPMRELRELC…AQETLSKLKN (68 aa)) constitute a DRBM 1 domain. Residues 1525–1556 (GSGKHDVNNGRNNQPKLATQSGRLPSEATEKS) are disordered. The span at 1533 to 1547 (NGRNNQPKLATQSGR) shows a compositional bias: polar residues. The region spanning 1569–1645 (TARSFLFELC…AQGALWCLKQ (77 aa)) is the DRBM 2 domain.

The protein belongs to the helicase family. Dicer subfamily. In terms of assembly, may interact with ARGONAUTE1 or PINHEAD through their common PAZ domains. Mg(2+) is required as a cofactor. The cofactor is Mn(2+). In terms of tissue distribution, expressed in roots, leaf blades, leaf sheaths, shoot apices and spikelets.

It localises to the nucleus. Involved in the RNA silencing pathway. Cleaves double-stranded RNA to produce small interfering RNAs (siRNAs) which target the selective destruction of complementary RNAs. Required for the production of 21 nucleotide siRNAs. Regulates shoot apical meristem (SAM) initiation and maintenance, leaf polarization and lemma polarity through the trans-acting siRNAS (ta-siRNAs) pathway, which probably modulate the expression of the ARF2, ARF3, ARF4, ARF14 and ARF15 genes. Can process endogenous 21 nucleotide siRNAs derived from an imperfect inverted repeat. May not be involved in microRNAs (miRNAs) production. This is Endoribonuclease Dicer homolog 4 (DCL4) from Oryza sativa subsp. japonica (Rice).